The chain runs to 227 residues: uncharacterized protein (227 aa).

Helical transmembrane passes span 17 to 37 (VGIKGYLAFFLTIIFFSGVFS), 79 to 99 (GFLFALELAPSVILSLGIISI), 112 to 132 (LMTPVLKPLLGIPGICSLALI), and 181 to 201 (VAVFAFLGTSVIVPLAVILVF).

The protein localises to the cell membrane. This is an uncharacterized protein from Escherichia coli (strain K12).